A 202-amino-acid chain; its full sequence is Transcriptional regulator GfcR 2 (202 aa).

This sequence belongs to the purine/pyrimidine phosphoribosyltransferase family. GfcR subfamily.

The sequence is that of Transcriptional regulator GfcR 2 from Methanosarcina barkeri (strain Fusaro / DSM 804).